The sequence spans 208 residues: MARYRGPVEKIERRLGVSLALKGERRLAGKSALEKRPYPPGQHGQRRSKISEYGLQLREKQKAKFMYGVAEKQFRNLFKEANRMEGNTGENLIKLLERRLDNVVYRMGFATTRRFARQLVNHGHVLVDGKRVNIPSFRVKPGQKIEIREKSKNNPQIQRSLELTNQTGIVPWVDVDKEKVFGIFTRIPEREEIDIPVEERLIVELYSK.

Positions 30-49 (KSALEKRPYPPGQHGQRRSK) are disordered. An S4 RNA-binding domain is found at 98–161 (RRLDNVVYRM…KNNPQIQRSL (64 aa)).

Belongs to the universal ribosomal protein uS4 family. As to quaternary structure, part of the 30S ribosomal subunit. Contacts protein S5. The interaction surface between S4 and S5 is involved in control of translational fidelity.

In terms of biological role, one of the primary rRNA binding proteins, it binds directly to 16S rRNA where it nucleates assembly of the body of the 30S subunit. Functionally, with S5 and S12 plays an important role in translational accuracy. The chain is Small ribosomal subunit protein uS4 from Nitratiruptor sp. (strain SB155-2).